The primary structure comprises 114 residues: UPF0342 protein NT01CX_2274 (114 aa).

Belongs to the UPF0342 family.

The protein is UPF0342 protein NT01CX_2274 of Clostridium novyi (strain NT).